The sequence spans 341 residues: L-threonine 3-dehydrogenase (341 aa).

C38 contacts Zn(2+). Active-site charge relay system residues include T40 and H43. Zn(2+) contacts are provided by H63, E64, C93, C96, C99, and C107. NAD(+) contacts are provided by residues I175, D195, R200, 262 to 264 (LGI), and 286 to 287 (IY).

It belongs to the zinc-containing alcohol dehydrogenase family. Homotetramer. The cofactor is Zn(2+).

The protein resides in the cytoplasm. It carries out the reaction L-threonine + NAD(+) = (2S)-2-amino-3-oxobutanoate + NADH + H(+). It functions in the pathway amino-acid degradation; L-threonine degradation via oxydo-reductase pathway; glycine from L-threonine: step 1/2. Functionally, catalyzes the NAD(+)-dependent oxidation of L-threonine to 2-amino-3-ketobutyrate. The chain is L-threonine 3-dehydrogenase from Alteromonas mediterranea (strain DSM 17117 / CIP 110805 / LMG 28347 / Deep ecotype).